We begin with the raw amino-acid sequence, 597 residues long: Phosphomethylpyrimidine synthase (597 aa).

Substrate contacts are provided by residues asparagine 207, methionine 236, tyrosine 265, histidine 301, 321 to 323 (SRG), 362 to 365 (DGLR), and glutamate 401. Residue histidine 405 coordinates Zn(2+). Substrate is bound at residue tyrosine 428. Residue histidine 469 coordinates Zn(2+). [4Fe-4S] cluster contacts are provided by cysteine 549, cysteine 552, and cysteine 557.

It belongs to the ThiC family. As to quaternary structure, homodimer. It depends on [4Fe-4S] cluster as a cofactor.

The catalysed reaction is 5-amino-1-(5-phospho-beta-D-ribosyl)imidazole + S-adenosyl-L-methionine = 4-amino-2-methyl-5-(phosphooxymethyl)pyrimidine + CO + 5'-deoxyadenosine + formate + L-methionine + 3 H(+). It functions in the pathway cofactor biosynthesis; thiamine diphosphate biosynthesis. In terms of biological role, catalyzes the synthesis of the hydroxymethylpyrimidine phosphate (HMP-P) moiety of thiamine from aminoimidazole ribotide (AIR) in a radical S-adenosyl-L-methionine (SAM)-dependent reaction. This chain is Phosphomethylpyrimidine synthase, found in Gluconobacter oxydans (strain 621H) (Gluconobacter suboxydans).